Consider the following 338-residue polypeptide: MLVLGIETSCDETGVALYDTRRKLLGHALYSQVDMHRDYGGVVPELASRDHIRRVLPLVTQVLEQTNTSLETIDAIAYTQGPGLAGALLTGASISNALAFARNIPVLNIHHLEGHLLSPLLSDPAPDFPFVALLVSGGHTQLMHVKGIGQYKLLGETVDDAAGEAFDKTAKLLGLDYPGGKLLADLATQGQPGRFKLPRPMLNSDDLNFSFSGLKTAAALLINKQKANTQTRADIALAFEDAVTDVLVKKSIAALKITRLQQLVVAGGVGANSRLRQKLRHHLVGTGIAVFFPELEFCTDNGAMIALAGALRLQQLNEKPPGSDGSFTIKARWNLEDL.

H111 and H115 together coordinate Fe cation. Residues 134 to 138, D167, G180, and N272 contribute to the substrate site; that span reads LVSGG. D300 contacts Fe cation.

Belongs to the KAE1 / TsaD family. Requires Fe(2+) as cofactor.

The protein resides in the cytoplasm. The catalysed reaction is L-threonylcarbamoyladenylate + adenosine(37) in tRNA = N(6)-L-threonylcarbamoyladenosine(37) in tRNA + AMP + H(+). Functionally, required for the formation of a threonylcarbamoyl group on adenosine at position 37 (t(6)A37) in tRNAs that read codons beginning with adenine. Is involved in the transfer of the threonylcarbamoyl moiety of threonylcarbamoyl-AMP (TC-AMP) to the N6 group of A37, together with TsaE and TsaB. TsaD likely plays a direct catalytic role in this reaction. In Nitrosomonas eutropha (strain DSM 101675 / C91 / Nm57), this protein is tRNA N6-adenosine threonylcarbamoyltransferase.